Reading from the N-terminus, the 492-residue chain is Probable sphingolipid transporter spinster homolog 1 (492 aa).

Residues 29-49 (FVTILCIINLINYVDRGVIAS) form a helical membrane-spanning segment. N53 and N76 each carry an N-linked (GlcNAc...) asparagine glycan. Transmembrane regions (helical) follow at residues 83–103 (GLLS…FAGL), 119–139 (VWTI…IAVF), 141–161 (MFVG…IDDS), 169–189 (FWLG…YVFG), 200–220 (WAFY…FCIK), 279–299 (VFIV…AYSY), and 317–337 (IFGG…SYVL). N-linked (GlcNAc...) asparagine glycosylation occurs at N341. 4 consecutive transmembrane segments (helical) span residues 348-368 (FKLL…AFLM), 372-392 (YAFI…QAPV), 407-427 (LSMA…SSPL), and 442-462 (TLII…GIFM). S472 carries the phosphoserine modification. A compositionally biased stretch (acidic residues) spans 472–481 (SEDDEVEEDK). Positions 472-492 (SEDDEVEEDKLESKTENSTLA) are disordered. A glycan (N-linked (GlcNAc...) asparagine) is linked at N488.

It belongs to the major facilitator superfamily. Spinster (TC 2.A.1.49) family.

It localises to the late endosome membrane. The protein resides in the lysosome membrane. Probable sphingolipid transporter that plays a central role in endosomes and/or lysosomes storage. This chain is Probable sphingolipid transporter spinster homolog 1, found in Arabidopsis thaliana (Mouse-ear cress).